Reading from the N-terminus, the 676-residue chain is MEKNLPDIFFFPNCVNVFSYKYSQDEFSNMSKTERDSFSLAVFPVIKHRWHNAHVVKHKGIYKVSTEARGKKVSPPSLGKPAHINLTAKQYIYSEHTISFECYSFLKCITNTEINSFDEYILRGLLEAGNSLQIFSNSVGKRTDTIGVLGNKYPFSKIPLASLTPKAQREIFSAWISHRPVVLTGGTGVGKTSQVPKLLLWFNYLFGGFSTLDKITNFHERPVILSLPRIALVRLHSNTILKSLGFKVLDGSPISLRYGSIPEELINKQPKKYGIVFSTHKLSLTKLFSYGTLIIDEVHEHDQIGDIIIAVARKHHTKIDSMFLMTATLEDDRERLKVFLPNPAFIHIPGDTLFKISEVFIHNKINPSSRMAYIEEEKRNLVTAIQMYTPPDGSSGIVFVASVAQCHEYKSYLEKRLPYDMYIIHGKVLDIDEILEKVYSSPNVSIIISTPYLESSVTIRNVTHIYDMGKVFVPAPFGGSQEFISKSMRDQRKGRVGRVNPGTYVYFYDLSYMKSIQRIDSEFLHNYILYANKFNLTLPEDLFIIPTNLDILWRTKEYIDSFDISTETWNKLLSNYYMKMIEYAKLYVLSPILAEELDNFERTGELTSIVREAILSLNLRIKILNFKHKDDDTYIHFCKILFGVYNGTNATIYYHRPLTGYMNMISDTIFVPVDNN.

One can recognise a Helicase ATP-binding domain in the interval 172–347 (FSAWISHRPV…VFLPNPAFIH (176 aa)). ATP is bound at residue 185 to 192 (GGTGVGKT). Positions 296–299 (DEVH) match the DEXH box motif. Residues 366 to 535 (NPSSRMAYIE…NYILYANKFN (170 aa)) enclose the Helicase C-terminal domain.

Belongs to the DEAD box helicase family. DEAH subfamily. Monomer.

Its subcellular location is the virion. It catalyses the reaction ATP + H2O = ADP + phosphate + H(+). NTP-dependent helicase that catalyzes unidirectional unwinding of 3'tailed duplex RNAs and plays an important role during transcription of early mRNAs, presumably by preventing R-loop formation behind the elongating RNA polymerase. Might also play a role in the export of newly synthesized mRNA chains out of the core into the cytoplasm. Required for replication and propagation of viral particles. This Bos taurus (Bovine) protein is RNA helicase NPH-II (OPG084).